We begin with the raw amino-acid sequence, 113 residues long: uncharacterized protein (113 aa).

This is an uncharacterized protein from Listeria innocua serovar 6a (strain ATCC BAA-680 / CLIP 11262).